Reading from the N-terminus, the 189-residue chain is UPF0301 protein bbp_491 (189 aa).

It belongs to the UPF0301 (AlgH) family.

The sequence is that of UPF0301 protein bbp_491 from Buchnera aphidicola subsp. Baizongia pistaciae (strain Bp).